The chain runs to 149 residues: Hut operon positive regulatory protein (149 aa).

This sequence belongs to the HutP family. As to quaternary structure, homohexamer.

In terms of biological role, antiterminator that binds to cis-acting regulatory sequences on the mRNA in the presence of histidine, thereby suppressing transcription termination and activating the hut operon for histidine utilization. The polypeptide is Hut operon positive regulatory protein (Geobacillus thermodenitrificans (strain NG80-2)).